We begin with the raw amino-acid sequence, 514 residues long: GTPase Obg (514 aa).

The Obg domain maps to 2–159 (ATFVDRVTVH…GDILLELKTV (158 aa)). A disordered region spans residues 62 to 88 (RRPHRSSGNGGFGMGDHRSGHTGEDLE). Positions 76 to 85 (GDHRSGHTGE) are enriched in basic and acidic residues. The 177-residue stretch at 160–336 (ADIALVGYPS…LSFALAELVE (177 aa)) folds into the OBG-type G domain. Residues 166–173 (GYPSAGKS), 191–195 (FTTLH), 212–215 (DVPG), 288–291 (NKID), and 317–319 (STV) each bind GTP. 2 residues coordinate Mg(2+): Ser173 and Thr193. An OCT domain is found at 356–440 (PKTVDDSGFV…ENGVVFDWEP (85 aa)).

It belongs to the TRAFAC class OBG-HflX-like GTPase superfamily. OBG GTPase family. Monomer. The cofactor is Mg(2+).

It localises to the cytoplasm. Functionally, an essential GTPase which binds GTP, GDP and possibly (p)ppGpp with moderate affinity, with high nucleotide exchange rates and a fairly low GTP hydrolysis rate. Plays a role in control of the cell cycle, stress response, ribosome biogenesis and in those bacteria that undergo differentiation, in morphogenesis control. This chain is GTPase Obg, found in Leifsonia xyli subsp. xyli (strain CTCB07).